A 556-amino-acid chain; its full sequence is Potassium-transporting ATPase potassium-binding subunit (556 aa).

A run of 10 helical transmembrane segments spans residues 6 to 26 (AGILFALSLALALAAVHVPLG), 65 to 85 (SVLAFSAVSILFLFGLQLLQG), 133 to 153 (GLSVQNFVSAAVGMAVAMAFV), 176 to 196 (LRILLPLSIIGAIILVSGGVI), 249 to 269 (PTTWTNWVEIFLLSCIAFSLP), 283 to 303 (AAILAVMAVIATLSLSLMMLF), 378 to 398 (GLYSMLVLAVITVFVAGLMVG), 419 to 439 (YFLVTPLIVLIGTAVAMALPG), 483 to 503 (ALGLAMVFGRFLPIILVLALA), and 526 to 546 (FVGMVTGVTLILVALTFLPVL).

Belongs to the KdpA family. As to quaternary structure, the system is composed of three essential subunits: KdpA, KdpB and KdpC.

The protein localises to the cell membrane. Part of the high-affinity ATP-driven potassium transport (or Kdp) system, which catalyzes the hydrolysis of ATP coupled with the electrogenic transport of potassium into the cytoplasm. This subunit binds the extracellular potassium ions and delivers the ions to the membrane domain of KdpB through an intramembrane tunnel. The chain is Potassium-transporting ATPase potassium-binding subunit from Mycobacterium sp. (strain KMS).